The primary structure comprises 190 residues: Ribosome hibernation promotion factor (190 aa).

The segment at 101 to 190 (RDRGDQEVFV…KYGLIQTSEQ (90 aa)) is required for ribosome-binding.

This sequence belongs to the HPF/YfiA ribosome-associated protein family. Long HPF subfamily. In terms of assembly, interacts with 100S ribosomes during exponential growth, as 100S ribosomes decrease (after 28 hours) also found associated with 30s and 50S subunits.

The protein localises to the cytoplasm. In terms of biological role, required and sufficient for dimerization of active 70S ribosomes into 100S ribosomes. 110S ribosomes are probably translationally inactive and may serve as a reservoir of easily reactivated ribosomes when necessary in the cell. Also reduces the translation efficiency of a small number of genes. Unlike E.coli, 100S ribosomes are present during exponential growth and decrease during stationary phase. This strain produces 30% fewer 100S ribosomes than strain N315 and RN4200 under the same growth conditions. The chain is Ribosome hibernation promotion factor from Staphylococcus aureus (strain USA300).